Here is a 49-residue protein sequence, read N- to C-terminus: Large ribosomal subunit protein bL33A (49 aa).

The protein belongs to the bacterial ribosomal protein bL33 family.

This chain is Large ribosomal subunit protein bL33A, found in Mycoplasmopsis agalactiae (strain NCTC 10123 / CIP 59.7 / PG2) (Mycoplasma agalactiae).